Consider the following 162-residue polypeptide: Globin CTT-VI (162 aa).

Positions 1 to 15 are cleaved as a signal peptide; sequence MKFLVLALCIAAASA. The region spanning 17 to 161 is the Globin domain; sequence VLTTEQADLV…TYAMLFSAMD (145 aa). Heme b is bound by residues H75 and H110.

The protein belongs to the globin family. In terms of assembly, homodimer.

This Chironomus thummi thummi (Midge) protein is Globin CTT-VI (CTT-6).